A 490-amino-acid polypeptide reads, in one-letter code: MTQWEVVIGLETHAQLSTVSKIFSGAPTQFGAEPNTQACPVDLALPGVLPVLNRGAVERAIRFGLAIGSTIAPRSIFARKNYFYPDLPKGYQISQYEIPVVQGGQITIQVPANEKAGKPAYEKTVNLTRAHLEEDAGKSLHEDFAGMTGIDLNRAGTPLLEIVTEPEMRSAAEAVAYAKSLHALVVWLGICDGNMQEGSFRCDANVSVRPVGQEKFGTRAEIKNLNSFRFLEEAINYEVRRQIELIEDGGEVVQETRLYDPDKRETRSMRSKEDAHDYRYFPDPDLMPLVIGQDWIERVQAGMPELPAAMQQRFVEQYGVSAYDAGVLTSSKAMAAYFEAVVAKAGAANAKIAANWLMGDVSSQLNRDGIEIDAIPVSAAQLALVLQRIADGTISNKIAKEIFSAIWDEKATDEAAADRIIDAKGLKQISDTGALEAIIDEVLAANAKSVEEFRAGKEKAFNALIGQAMKATKGKANPQQVNELLKKKLG.

Belongs to the GatB/GatE family. GatB subfamily. As to quaternary structure, heterotrimer of A, B and C subunits.

It carries out the reaction L-glutamyl-tRNA(Gln) + L-glutamine + ATP + H2O = L-glutaminyl-tRNA(Gln) + L-glutamate + ADP + phosphate + H(+). The enzyme catalyses L-aspartyl-tRNA(Asn) + L-glutamine + ATP + H2O = L-asparaginyl-tRNA(Asn) + L-glutamate + ADP + phosphate + 2 H(+). Its function is as follows. Allows the formation of correctly charged Asn-tRNA(Asn) or Gln-tRNA(Gln) through the transamidation of misacylated Asp-tRNA(Asn) or Glu-tRNA(Gln) in organisms which lack either or both of asparaginyl-tRNA or glutaminyl-tRNA synthetases. The reaction takes place in the presence of glutamine and ATP through an activated phospho-Asp-tRNA(Asn) or phospho-Glu-tRNA(Gln). In Burkholderia ambifaria (strain MC40-6), this protein is Aspartyl/glutamyl-tRNA(Asn/Gln) amidotransferase subunit B.